We begin with the raw amino-acid sequence, 333 residues long: NADH-ubiquinone oxidoreductase chain 2 (333 aa).

A run of 10 helical transmembrane segments spans residues tryptophan 10–isoleucine 30, leucine 57–tyrosine 77, phenylalanine 91–isoleucine 111, glutamine 121–threonine 141, isoleucine 143–asparagine 163, lysine 170–asparagine 190, asparagine 192–leucine 212, methionine 242–valine 262, tryptophan 267–leucine 287, and serine 313–leucine 333.

Belongs to the complex I subunit 2 family.

It is found in the mitochondrion inner membrane. It catalyses the reaction a ubiquinone + NADH + 5 H(+)(in) = a ubiquinol + NAD(+) + 4 H(+)(out). In terms of biological role, core subunit of the mitochondrial membrane respiratory chain NADH dehydrogenase (Complex I) that is believed to belong to the minimal assembly required for catalysis. Complex I functions in the transfer of electrons from NADH to the respiratory chain. The immediate electron acceptor for the enzyme is believed to be ubiquinone. In Apis mellifera ligustica (Common honeybee), this protein is NADH-ubiquinone oxidoreductase chain 2 (ND2).